Here is a 610-residue protein sequence, read N- to C-terminus: Peptidyl-prolyl cis-trans isomerase 9 (610 aa).

Phosphoserine is present on Ser-13. WD repeat units lie at residues 45-83, 88-127, and 177-216; these read MHNA…VEYI, AHNA…LVNI, and KHTA…QKPD. The region spanning 453-607 is the PPIase cyclophilin-type domain; it reads LGKAAIIHTT…EPTKIINISI (155 aa).

Belongs to the cyclophilin-type PPIase family.

The protein localises to the nucleus. It catalyses the reaction [protein]-peptidylproline (omega=180) = [protein]-peptidylproline (omega=0). PPIases accelerate the folding of proteins. It catalyzes the cis-trans isomerization of proline imidic peptide bonds in oligopeptides. In Schizosaccharomyces pombe (strain 972 / ATCC 24843) (Fission yeast), this protein is Peptidyl-prolyl cis-trans isomerase 9 (cyp9).